The following is a 501-amino-acid chain: Probable cysteine desulfurase, mitochondrial (501 aa).

Residues 172–173, asparagine 252, glutamine 280, and 300–302 each bind pyridoxal 5'-phosphate; these read AT and SAH. Position 303 is an N6-(pyridoxal phosphate)lysine (lysine 303). Residue threonine 340 participates in pyridoxal 5'-phosphate binding. The active-site Cysteine persulfide intermediate is the cysteine 425. Cysteine 425 is a binding site for [2Fe-2S] cluster.

This sequence belongs to the class-V pyridoxal-phosphate-dependent aminotransferase family. NifS/IscS subfamily. It depends on pyridoxal 5'-phosphate as a cofactor.

The protein localises to the mitochondrion. It carries out the reaction (sulfur carrier)-H + L-cysteine = (sulfur carrier)-SH + L-alanine. Its function is as follows. Catalyzes the removal of elemental sulfur from cysteine to produce alanine. It supplies the inorganic sulfur for iron-sulfur (Fe-S) clusters. Plays a role in both tRNA-processing and mitochondrial metabolism. Involved in the 2-thio-modification of both 5-carboxymethylaminomethyl-2-thiouridine in mitochondrial tRNAs and 5-methoxycarbonylmethyl-2-thiouridine (mcm5s2U) in cytoplasmic tRNAs. This chain is Probable cysteine desulfurase, mitochondrial, found in Schizosaccharomyces pombe (strain 972 / ATCC 24843) (Fission yeast).